The primary structure comprises 433 residues: Enolase (433 aa).

Glutamine 167 provides a ligand contact to (2R)-2-phosphoglycerate. Residue glutamate 209 is the Proton donor of the active site. Residues aspartate 246, glutamate 291, and aspartate 318 each contribute to the Mg(2+) site. Residues lysine 343, arginine 372, serine 373, and lysine 394 each contribute to the (2R)-2-phosphoglycerate site. The active-site Proton acceptor is lysine 343.

This sequence belongs to the enolase family. As to quaternary structure, component of the RNA degradosome, a multiprotein complex involved in RNA processing and mRNA degradation. The cofactor is Mg(2+).

It is found in the cytoplasm. It localises to the secreted. The protein resides in the cell surface. It catalyses the reaction (2R)-2-phosphoglycerate = phosphoenolpyruvate + H2O. It participates in carbohydrate degradation; glycolysis; pyruvate from D-glyceraldehyde 3-phosphate: step 4/5. Its function is as follows. Catalyzes the reversible conversion of 2-phosphoglycerate (2-PG) into phosphoenolpyruvate (PEP). It is essential for the degradation of carbohydrates via glycolysis. The chain is Enolase from Sodalis glossinidius (strain morsitans).